Here is a 357-residue protein sequence, read N- to C-terminus: UDP-arabinopyranose mutase 1 (357 aa).

An N-acetylvaline modification is found at valine 2. The DXD motif motif lies at 110 to 112 (DDD). The N-linked (Glc...) arginine glycan is linked to arginine 158.

This sequence belongs to the RGP family. As to quaternary structure, heteromers with RGP2, RGP3, RGP4 and RGP5. The cofactor is Mn(2+). Requires Mg(2+) as cofactor. Reversibly glycosylated in vitro by UDP-glucose, UDP-xylose and UDP-galactose, but not UDP-mannose. In terms of tissue distribution, predominantly expressed in shoot and root apical meristems. Expressed in epidermal cells of leaves, inflorescence stems and seed coat. Expressed in pollen.

It localises to the cytoplasm. Its subcellular location is the cytosol. The protein resides in the golgi apparatus. The enzyme catalyses UDP-beta-L-arabinofuranose = UDP-beta-L-arabinopyranose. In terms of biological role, UDP-L-arabinose mutase involved in the biosynthesis of cell wall non-cellulosic polysaccharides. Catalyzes the interconvertion of UDP-L-arabinopyranose (UDP-Arap) and UDP-L-arabinofuranose (UDP-Araf) in vitro. Preferentially catalyzes the formation of UDP-Arap from UDP-Araf. At thermodynamic equilibrium in vitro the ratio of the pyranose form over the furanose form is 95:5. Is not active on other UDP-sugars (UDP-Gal, UDP-Xyl, UDP-Glc, GDP-Man and GDP-Fuc). Functions redundantly with RGP2 and is essential for proper cell walls and pollen development. Probably involved in the formation of the pectocellulosic cell wall layer intine. Is probably active as heteromer in vivo. The polypeptide is UDP-arabinopyranose mutase 1 (Arabidopsis thaliana (Mouse-ear cress)).